The primary structure comprises 29 residues: Cytolysin Uc-1 (29 aa).

The segment covering 1–15 has biased composition (polar residues); sequence DEQTGSKGPNENLPS. The tract at residues 1-29 is disordered; sequence DEQTGSKGPNENLPSQKDLXAKASXLTEV.

The protein resides in the secreted. It is found in the nematocyst. It localises to the target cell membrane. Pore-forming toxin that lyses bovine erythrocytes at nanomolar concentrations. Is devoid of enzymatic activity. Binds to monolayers and efficiently permeabilizes small lipid vesicles composed of sphingomyelin and cholesterol. The cytolytic activity is not prevented by cholesterol or sphingomyelin. The protein is Cytolysin Uc-1 of Urticina crassicornis (Mottled anemone).